The sequence spans 133 residues: Interleukin-4 (133 aa).

A signal peptide spans 1–24; it reads MGLTSQLIPMLVCLLACTSNFVHG. 3 disulfides stabilise this stretch: Cys27–Cys133, Cys48–Cys85, and Cys70–Cys105. Residues Asn62, Asn96, and Asn102 are each glycosylated (N-linked (GlcNAc...) asparagine).

Belongs to the IL-4/IL-13 family.

It is found in the secreted. Participates in at least several B-cell activation processes as well as of other cell types. It is a costimulator of DNA-synthesis. It induces the expression of class II MHC molecules on resting B-cells. It enhances both secretion and cell surface expression of IgE and IgG1. It also regulates the expression of the low affinity Fc receptor for IgE (CD23) on both lymphocytes and monocytes. Positively regulates IL31RA expression in macrophages. Stimulates autophagy in dendritic cells by interfering with mTORC1 signaling and through the induction of RUFY4. This chain is Interleukin-4 (IL4), found in Tursiops truncatus (Atlantic bottle-nosed dolphin).